Here is a 298-residue protein sequence, read N- to C-terminus: MLKIGSHVSMSGKKMLLAASEEAVSYGATTFMIYTGAPQNTRRKPIEELNIEAGRKHMEEHGIKEIIVHAPYIINIGNTTKPETFQLGVDFLRMEIERTEALGVAKQIVLHPGAHVGAGADAGIAQIIKGLNEVLTPEQTVNIALETMAGKGTECGRSFEEIARIIDGVTYNEKLSVCFDTCHTHDAGYDIANDFDGVLNEFDKIVGIDRLQVLHVNDSKNVRGAAKDRHENIGFGHIGYKALHDIVHHPQLEHIPKILETPYVGEEKKDKKPPYKFEIEMLKNGTFDEGLLEKIKGQ.

The Zn(2+) site is built by His69, His111, Glu146, Asp180, His183, His215, Asp228, His230, and Glu260.

It belongs to the AP endonuclease 2 family. Zn(2+) serves as cofactor.

The catalysed reaction is Endonucleolytic cleavage to 5'-phosphooligonucleotide end-products.. Its function is as follows. Endonuclease IV plays a role in DNA repair. It cleaves phosphodiester bonds at apurinic or apyrimidinic (AP) sites, generating a 3'-hydroxyl group and a 5'-terminal sugar phosphate. The protein is Probable endonuclease 4 of Bacillus cytotoxicus (strain DSM 22905 / CIP 110041 / 391-98 / NVH 391-98).